A 143-amino-acid polypeptide reads, in one-letter code: uncharacterized protein (143 aa).

The interval 1–21 is disordered; the sequence is MAAMDTGQRADPSNPGDKEGD.

This is an uncharacterized protein from Homo sapiens (Human).